The following is a 373-amino-acid chain: Peroxisomal biogenesis factor 3 (373 aa).

The Cytoplasmic segment spans residues methionine 1–lysine 15. The targeting to peroxisomes stretch occupies residues methionine 1–alanine 45. A helical membrane pass occupies residues cysteine 16–lysine 36. Residues isoleucine 37 to isoleucine 116 lie on the Peroxisomal side of the membrane. Residues valine 117 to isoleucine 140 traverse the membrane as a helical segment. The interval tyrosine 120–isoleucine 136 is interaction with PEX19. Residues tyrosine 141 to lysine 373 are Cytoplasmic-facing.

This sequence belongs to the peroxin-3 family. Interacts with PEX19.

The protein resides in the peroxisome membrane. In terms of biological role, involved in peroxisome biosynthesis and integrity. Assembles membrane vesicles before the matrix proteins are translocated. As a docking factor for PEX19, is necessary for the import of peroxisomal membrane proteins in the peroxisomes. This is Peroxisomal biogenesis factor 3 (PEX3) from Cricetulus longicaudatus (Long-tailed dwarf hamster).